We begin with the raw amino-acid sequence, 232 residues long: Aspartate racemase (232 aa).

Position 49-51 (49-51) interacts with substrate; sequence DRT. The Proton donor/acceptor role is filled by cysteine 84. Substrate-binding positions include 85–87 and lysine 166; that span reads NTA. Residue cysteine 195 is the Proton donor/acceptor of the active site.

This sequence belongs to the aspartate/glutamate racemases family.

The catalysed reaction is L-aspartate = D-aspartate. The protein is Aspartate racemase of Thermococcus sp. (strain KS-8).